The primary structure comprises 882 residues: Protein O-mannosyl-transferase TMTC1 (882 aa).

Residues 1–20 lie on the Cytoplasmic side of the membrane; the sequence is MVVTTSARGGGGDRTPSRRR. The segment at 1–20 is disordered; sequence MVVTTSARGGGGDRTPSRRR. The chain crosses the membrane as a helical span at residues 21-41; that stretch reads GCGLAPAGAAALLAGASCLCY. The Extracellular segment spans residues 42 to 110; that stretch reads GRSLQGEFVH…KLNIFLTGMN (69 aa). A glycan (N-linked (GlcNAc...) asparagine) is linked at Asn86. A helical membrane pass occupies residues 111–131; the sequence is PFYFHAVNIILHCLVTLVLMY. The Cytoplasmic segment spans residues 132 to 137; that stretch reads TCDKTV. The helical transmembrane segment at 138-157 threads the bilayer; sequence FKNRGLAFVTALLFAVHPIH. Over 158–160 the chain is Extracellular; that stretch reads TEA. A helical membrane pass occupies residues 161–181; the sequence is VAGIVGRADVLACLLFLLAFL. The Cytoplasmic segment spans residues 182-197; that stretch reads SYNRSLDQGCVGGSFP. A helical membrane pass occupies residues 198–218; that stretch reads STVSPFFLLLSLFLGTCAMLV. The Extracellular portion of the chain corresponds to 219–221; the sequence is KET. The helical transmembrane segment at 222–238 threads the bilayer; the sequence is GITVFGVCLVYDLFSLS. The Cytoplasmic portion of the chain corresponds to 239-313; the sequence is NKQDKSSNGA…SPRAVWSMMR (75 aa). Residues 246-277 are disordered; it reads NGALCPRSPQQPGSPQPSSLPGHPHRENGKQQ. Over residues 251–267 the composition is skewed to low complexity; sequence PRSPQQPGSPQPSSLPG. The helical transmembrane segment at 314–334 threads the bilayer; sequence FLTYSYLLAFNVWLLLAPVTL. Residues 335–354 lie on the Extracellular side of the membrane; that stretch reads CYDWQVGSIPLVETIWDMRN. A helical transmembrane segment spans residues 355–375; the sequence is LATIFLAVVMALLSLHCLAAF. Residues 376–381 lie on the Cytoplasmic side of the membrane; sequence KRLEHK. The helical transmembrane segment at 382–402 threads the bilayer; that stretch reads EVLVGLLFLVFPFIPASNLFF. Residue Arg403 is a topological domain, extracellular. The helical transmembrane segment at 404–424 threads the bilayer; it reads VGFVVAERVLYMPSMGYCILF. The Cytoplasmic segment spans residues 425–438; the sequence is VHGLSKLCTWLNRC. A helical transmembrane segment spans residues 439-459; that stretch reads GATTLIVSTVLLLLLFSWKTV. Over 460–882 the chain is Extracellular; sequence KQNEIWLSRE…LQEVREKDQT (423 aa). TPR repeat units follow at residues 483-516, 517-547, 548-581, 582-615, 616-649, 650-682, 683-716, 751-784, 789-822, and 823-856; these read AKVHYNYANFLKDQGRNKEAIYHYRTALKLYPRH, ASALNNLGTLTRDTAEAKMYYQRALQLHPQH, NRALFNLGNLLKSQEKKEEAITLLKDSIKYGPEF, ADAYSSLASLLAEQERFKEAEEIYQTGIKNCPDS, SDLHNNYGVFLVDTGLPEKAVAHYQQAIKLSPSH, HVAMVNLGRLYRSLGENSMAEEWYKRALQVAHK, AEILSPLGALYYNTGRYEEALQIYQEAAALQPSQ, LECYRLLSAIYSKQENHDKALDAIDKALQLKPKD, SELFFTKGNQLREQNLLDKAFESYRVAVQLNPDQ, and AQAWMNMGGIQHIKGKYVSARAYYERALQLVPDS.

Belongs to the TMTC family. In terms of assembly, may interact with FAM168B.

It is found in the membrane. It localises to the endoplasmic reticulum. The catalysed reaction is a di-trans,poly-cis-dolichyl beta-D-mannosyl phosphate + L-seryl-[protein] = 3-O-(alpha-D-mannosyl)-L-seryl-[protein] + a di-trans,poly-cis-dolichyl phosphate + H(+). It catalyses the reaction a di-trans,poly-cis-dolichyl beta-D-mannosyl phosphate + L-threonyl-[protein] = 3-O-(alpha-D-mannosyl)-L-threonyl-[protein] + a di-trans,poly-cis-dolichyl phosphate + H(+). The protein operates within protein modification; protein glycosylation. Transfers mannosyl residues to the hydroxyl group of serine or threonine residues. The 4 members of the TMTC family are O-mannosyl-transferases dedicated primarily to the cadherin superfamily, each member seems to have a distinct role in decorating the cadherin domains with O-linked mannose glycans at specific regions. Also acts as O-mannosyl-transferase on other proteins such as PDIA3. This Homo sapiens (Human) protein is Protein O-mannosyl-transferase TMTC1.